Reading from the N-terminus, the 245-residue chain is 8-amino-3,8-dideoxy-manno-octulosonate cytidylyltransferase (245 aa).

The protein belongs to the KdsB family.

It localises to the cytoplasm. The enzyme catalyses 8-amino-3,8-dideoxy-alpha-D-manno-octulosonate + CTP = CMP-8-amino-3,8-dideoxy-alpha-D-manno-oct-2-ulosonate + diphosphate. Its pathway is bacterial outer membrane biogenesis; lipopolysaccharide biosynthesis. Its function is as follows. Activates KDO8N (a required 8-carbon sugar) for incorporation into bacterial lipopolysaccharide in the Shewanella genus. The sequence is that of 8-amino-3,8-dideoxy-manno-octulosonate cytidylyltransferase from Shewanella amazonensis (strain ATCC BAA-1098 / SB2B).